Reading from the N-terminus, the 434-residue chain is Alpha-enolase (434 aa).

Ser-2 is subject to N-acetylserine. Ser-40 provides a ligand contact to Mg(2+). At Tyr-44 the chain carries Phosphotyrosine. Position 60 is an N6-acetyllysine; alternate (Lys-60). Lys-60 carries the N6-succinyllysine; alternate modification. Lys-71 is subject to N6-acetyllysine. Lys-89 is modified (N6-acetyllysine; alternate). At Lys-89 the chain carries N6-succinyllysine; alternate. N6-acetyllysine occurs at positions 92 and 126. Residues His-158 and Glu-167 each contribute to the substrate site. An N6-acetyllysine mark is found at Lys-193 and Lys-199. Position 202 is an N6-acetyllysine; alternate (Lys-202). Lys-202 participates in a covalent cross-link: Glycyl lysine isopeptide (Lys-Gly) (interchain with G-Cter in SUMO2); alternate. The active-site Proton donor is the Glu-210. N6-acetyllysine; alternate is present on residues Lys-228 and Lys-233. At Lys-228 the chain carries N6-succinyllysine; alternate. Lys-228 carries the post-translational modification N6-(2-hydroxyisobutyryl)lysine; alternate. An N6-malonyllysine; alternate modification is found at Lys-233. Asp-245 is a binding site for Mg(2+). Ser-254 is subject to Phosphoserine. Lys-256 carries the post-translational modification N6-acetyllysine. The residue at position 263 (Ser-263) is a Phosphoserine. N6-acetyllysine; alternate is present on Lys-281. Position 281 is an N6-(2-hydroxyisobutyryl)lysine; alternate (Lys-281). Tyr-287 is subject to Phosphotyrosine. Ser-291 is modified (phosphoserine). Mg(2+)-binding residues include Glu-293 and Asp-318. Residues Glu-293 and Asp-318 each coordinate substrate. N6-acetyllysine is present on residues Lys-335 and Lys-343. The active-site Proton acceptor is Lys-343. Residues 370–373 (SHRS) and Lys-394 each bind substrate. Positions 405–434 (AKYNQILRIEEELGSKAKFAGRSFRNPLAK) are required for interaction with PLG. Lys-406 is subject to N6-acetyllysine. N6-acetyllysine; alternate is present on Lys-420. Lys-420 is subject to N6-succinyllysine; alternate. At Lys-420 the chain carries N6-malonyllysine; alternate.

Belongs to the enolase family. Mammalian enolase is composed of 3 isozyme subunits, alpha, beta and gamma, which can form homodimers or heterodimers which are cell-type and development-specific. ENO1 interacts with PLG in the neuronal plasma membrane and promotes its activation. The C-terminal lysine is required for this binding. In vitro, interacts with several glycolytic enzymes including PKM, PGM, CKM and aldolase. Also binds troponin, in vitro. Interacts with ENO4 and PGAM2. Interacts with CMTM6. Mg(2+) serves as cofactor. In terms of processing, ISGylated. Lysine 2-hydroxyisobutyrylation (Khib) by p300/EP300 activates the phosphopyruvate hydratase activity. Testis. Found in the principal piece of sperm tail (at protein level). The alpha/alpha homodimer is expressed in embryo and in most adult tissues. The alpha/beta heterodimer and the beta/beta homodimer are found in striated muscle, and the alpha/gamma heterodimer and the gamma/gamma homodimer in neurons. In striated muscle, expression of ENO1 appears to be independent of fiber type.

Its subcellular location is the cytoplasm. It is found in the cell membrane. The catalysed reaction is (2R)-2-phosphoglycerate = phosphoenolpyruvate + H2O. It participates in carbohydrate degradation; glycolysis; pyruvate from D-glyceraldehyde 3-phosphate: step 4/5. Its function is as follows. Glycolytic enzyme the catalyzes the conversion of 2-phosphoglycerate to phosphoenolpyruvate. In addition to glycolysis, involved in various processes such as growth control, hypoxia tolerance and allergic responses. May also function in the intravascular and pericellular fibrinolytic system due to its ability to serve as a receptor and activator of plasminogen on the cell surface of several cell-types such as leukocytes and neurons. Stimulates immunoglobulin production. The polypeptide is Alpha-enolase (Eno1) (Mus musculus (Mouse)).